Reading from the N-terminus, the 680-residue chain is Conserved oligomeric Golgi complex subunit 6 (680 aa).

Residues 479 to 517 (HKSKKSGQLPRRSRTSSDSSQLTSVDALLSSSPSPPQNN) are disordered.

The protein belongs to the COG6 family. Component of the conserved oligomeric Golgi complex which is composed of eight different subunits and is required for normal Golgi morphology and localization. Interacts with COG5, COG7 and COG8.

The protein localises to the golgi apparatus membrane. Functionally, required for normal Golgi function. The polypeptide is Conserved oligomeric Golgi complex subunit 6 (Arabidopsis thaliana (Mouse-ear cress)).